The following is a 383-amino-acid chain: Flagellum-associated coiled-coil domain-containing protein 1 (383 aa).

Residues 26 to 79 are disordered; that stretch reads PYPLPKHPTGKFKPVLPPPISKEHNSLLSQPGKSTVSPRDKVQSGNTESSKAPS. Residues 51–77 show a composition bias toward polar residues; sequence SLLSQPGKSTVSPRDKVQSGNTESSKA. Coiled-coil stretches lie at residues 125–220 and 276–359; these read TDII…YLKS and KKMN…FQTK. An N6-acetyllysine modification is found at lysine 354.

Isoform 1 is specific to germ cells of the testis and localizes to the principal piece of the sperm flagellum. Isoform 2 seems to be expressed mainly in somatic cells of the testis, and is not detected in mature spermatozoa (at protein level). Isoform 2 may also be expressed weakly in brain.

Its subcellular location is the cytoplasm. It localises to the cytoplasmic granule. The protein localises to the cell projection. The protein resides in the cilium. It is found in the flagellum. The chain is Flagellum-associated coiled-coil domain-containing protein 1 from Mus musculus (Mouse).